We begin with the raw amino-acid sequence, 219 residues long: Cytidylate kinase (219 aa).

Position 9–17 (9–17 (GPAGSGKTT)) interacts with ATP.

Belongs to the cytidylate kinase family. Type 1 subfamily.

It localises to the cytoplasm. It carries out the reaction CMP + ATP = CDP + ADP. The catalysed reaction is dCMP + ATP = dCDP + ADP. The protein is Cytidylate kinase of Fervidobacterium nodosum (strain ATCC 35602 / DSM 5306 / Rt17-B1).